The sequence spans 552 residues: DNA ligase (552 aa).

An ATP-binding site is contributed by Glu-244. Lys-246 (N6-AMP-lysine intermediate) is an active-site residue. 6 residues coordinate ATP: Arg-251, Arg-266, Glu-296, Phe-336, Arg-408, and Lys-414.

It belongs to the ATP-dependent DNA ligase family. The cofactor is Mg(2+).

It catalyses the reaction ATP + (deoxyribonucleotide)n-3'-hydroxyl + 5'-phospho-(deoxyribonucleotide)m = (deoxyribonucleotide)n+m + AMP + diphosphate.. Its function is as follows. DNA ligase that seals nicks in double-stranded DNA during DNA replication, DNA recombination and DNA repair. In Methanothrix thermoacetophila (strain DSM 6194 / JCM 14653 / NBRC 101360 / PT) (Methanosaeta thermophila), this protein is DNA ligase.